Reading from the N-terminus, the 313-residue chain is Aspartate carbamoyltransferase catalytic subunit (313 aa).

Residues arginine 58 and threonine 59 each coordinate carbamoyl phosphate. Lysine 86 lines the L-aspartate pocket. Carbamoyl phosphate-binding residues include arginine 108, histidine 136, and glutamine 139. Arginine 169 and arginine 223 together coordinate L-aspartate. Positions 264 and 265 each coordinate carbamoyl phosphate.

This sequence belongs to the aspartate/ornithine carbamoyltransferase superfamily. ATCase family. Heterododecamer (2C3:3R2) of six catalytic PyrB chains organized as two trimers (C3), and six regulatory PyrI chains organized as three dimers (R2).

The enzyme catalyses carbamoyl phosphate + L-aspartate = N-carbamoyl-L-aspartate + phosphate + H(+). Its pathway is pyrimidine metabolism; UMP biosynthesis via de novo pathway; (S)-dihydroorotate from bicarbonate: step 2/3. Catalyzes the condensation of carbamoyl phosphate and aspartate to form carbamoyl aspartate and inorganic phosphate, the committed step in the de novo pyrimidine nucleotide biosynthesis pathway. The sequence is that of Aspartate carbamoyltransferase catalytic subunit from Ruminiclostridium cellulolyticum (strain ATCC 35319 / DSM 5812 / JCM 6584 / H10) (Clostridium cellulolyticum).